Reading from the N-terminus, the 100-residue chain is Small ribosomal subunit protein uS14c (100 aa).

It belongs to the universal ribosomal protein uS14 family. In terms of assembly, part of the 30S ribosomal subunit.

It localises to the plastid. The protein localises to the chloroplast. Functionally, binds 16S rRNA, required for the assembly of 30S particles. This Cycas taitungensis (Prince sago) protein is Small ribosomal subunit protein uS14c.